Reading from the N-terminus, the 477-residue chain is Prolyl tri/tetrapeptidyl aminopeptidase (477 aa).

Positions Met1–Ala27 are cleaved as a signal peptide. Positions Ala28–Pro33 are excised as a propeptide. A disordered region spans residues Gln448 to Pro477. Positions Ala462–Pro477 are enriched in basic and acidic residues.

The protein belongs to the peptidase S37 family.

It is found in the secreted. The protein localises to the cell surface. Its activity is regulated as follows. Completely inhibited by the serine protease inhibitor phenylmethylsulfonyl fluoride. Partially inhibited by the serine protease inhibitor Pefabloc. Not inhibited by cysteine proteinase-specific or metalloproteinase-specific inhibitors. Not inhibited by prolinal or its derivatives. EDTA and EGTA both partially inhibit this enzyme. EDTA has no effect on activity. In terms of biological role, has proline-specific tripeptidyl aminopeptidase and tetrapeptidyl aminopeptidase activity. Activity is highest against tripeptides containing an Ala-Pro motif. Involved in the final processing of transglutaminase, by removing either the tetrapeptide Phe-Arg-Ala-Pro left after TAMEP or SAM-P45 hydrolysis, or the tripeptide Arg-Ala-Pro left after SGMP II hydrolysis in a single step. The sequence is that of Prolyl tri/tetrapeptidyl aminopeptidase (ptp) from Streptomyces mobaraensis (Streptoverticillium mobaraense).